Reading from the N-terminus, the 150-residue chain is Galactose-binding lectin (150 aa).

Histidine 16 and glycine 19 together coordinate D-galactose. N-linked (GlcNAc...) asparagine glycosylation is present at asparagine 26. Residues asparagine 27, 35 to 37 (DIH), histidine 64, and glycine 67 each bind D-galactose. N-linked (GlcNAc...) asparagine glycosylation is present at asparagine 74. Residues glutamate 75, 83–85 (DRH), histidine 108, and glycine 111 contribute to the D-galactose site. N-linked (GlcNAc...) asparagine glycosylation occurs at asparagine 118. D-galactose contacts are provided by residues asparagine 119 and 127 to 129 (DKH).

Monomer in solution. Homodimer in solution. Exists as a monomer in solution when a low concentration (0.001 mg/ml) of it is present. Homodimers start to appear at a concentration of 0.01 mg/ml and tetramers at a concentration of 0.1 mg/ml. In terms of tissue distribution, highly expressed in mantle and to a lesser extent in muscle, hepatopancreas, gill and hemocytes.

Bacterial binding activity is inhibited by D-galactose. Hemagglutinating activity is independent of divalent cations Ca2(+) or Mg2(+). It is strongly inhibited by N-acetyl-D-galactosamine (GalNAc), D-galactose and D-talose, and to a lesser extent by melibiose and raffinose. Also inhibited by glycoprotein asialo-bovine submaxillary mucin (BSM). Not inhibited by D-glucose, D-fucose, D-galactitol, N-acetyl-D-glucosamine or lactose. Fungal binding activity is inhibited by D-galactose. Cytotoxic activity against Raji cell line is completely inhibited by galactose, melibiose and raffinose, but not by glucose or lactose. Galactose inhibits binding to laminin and BSM, but not to collagen, gelatin or fibronectin. Galactose-binding lectin. Binds both alpha and beta anomer of galactose (Gal), but has a stronger interaction with the glycans having alpha Gal at the non-reducing end and binds beta Gal weakly only in highly branched glycans. Has high affinity to Galalpha1-4Galbeta1-4GlcNAc. Binds N-acetyl-2-deoxy-2-amino-galactose (2-deoxy-GalNAc). Binds N-acetylgalactosamine (GalNAc). Binds porcine stomach mucin (PSM) with high affinity. Binds galactosamine. Binds laminin, bovine submaxillary mucin (BSM), fibronectin, type I collagen and gelatin with a decreasing affinity, respectively. Has hemagglutinating activity towards human type A erythrocytes. Also hemagglutinates human type 0, B and AB erythrocytes as well as rabbit and mouse erythrocytes. Agglutinates both Gram-positive and Gram-negative bacteria including B.subtilis ATCC 6633, S.aureus ATCC 21027 and E.coli 3254, respectively. No agglutination activity towards Gram-positive S.amurskyense CMM 3673. Has bacteriostatic activity on S.amurskyense CMM 3673, B.subtilis ATCC 6633, S.aureus ATCC 21027 and E.coli 3254. However, has no agglutination nor bacteriostatic activity on Gram-negative C.scophthalmum CIP 104199 or A.troitsensis KMM 3674. Inhibits growth of fungi from the genera Aspergillus, Penicillium, Trichoderma and st. Mycelia. Inhibits germination of spores and hyphal growth of them. Has dose-dependent cytotoxic effect on the human globotriaosylceramide (Gb3)-expressing Burkitt's lymphoma (Raji) cell line. Binds to Gb3 in these cells leading to activation of caspase-9/3 and PARP. Has dose-dependent cytotoxic effect on the Gb3-expressing human MCF-7 breast cancer cell line. No cytotoxic effect on myelogenous leukemia K562 cell line, which does not express Gb3. Activates immune responses in mice and increases cytokine production of TNF-alpha, IL-6 and MCP-1 in the serum and the peritoneal lavage of mice. Induces TNF-alpha and IL-6 secretion in mouse RAW264.7 macrophages, mouse bone marrow-derived macrophages, human THP-1 macrophages, human peripheral blood mononuclear cells (PBMCs) and human blood monocyte-derived macrophages. TNF-alpha production in macrophages could not be inhibited by GalNAc, GalN or Gal, indicating that induced cytokine production is separate from its sugar binding activity. Increases intracellular reactive oxygen species levels, expression and phosphorylation of protein kinases PKC alpha/delta, expression of COX-2 and NF-kappaB, and activates the MAPK pathway by increasing the phosphorylation of ERK1/2, JNK1/2 and p38 in mouse RAW264.7 macrophages. Induces endotoxin tolerance in lipopolysaccharide(LPS)-activated macrophages by down-regulating IRAK2 expression, reducing JNK1/2 phosphorylation and NF-kappaB activation. Can slightly increase the bactericidal activity of RAW264.7 macrophages. Has DNA-binding activity. Recognizes pathogen-associated molecular patterns (PAMPs) and binds to LPS from E.coli, but has only little binding to beta-1,3-glucan from E.gracilis and peptidoglycan from S.aureus. Activates secretion of TNF-alpha and IFN-gamma by the human peripheral blood cells (HPBCs). May be involved in innate immunity acting as an antibacterial and antifungal agent involved in the recognition and clearance of pathogens. The polypeptide is Galactose-binding lectin (Crenomytilus grayanus (Gray mussel)).